A 731-amino-acid polypeptide reads, in one-letter code: Putative beta-galactosidase (731 aa).

A signal peptide spans methionine 1–glycine 29. Glutamate 187 (proton donor) is an active-site residue. The active-site Nucleophile is the glutamate 257.

This sequence belongs to the glycosyl hydrolase 35 family. Senescing flower petals.

The enzyme catalyses Hydrolysis of terminal non-reducing beta-D-galactose residues in beta-D-galactosides.. This chain is Putative beta-galactosidase (CARSR12), found in Dianthus caryophyllus (Carnation).